A 128-amino-acid polypeptide reads, in one-letter code: Holo-[acyl-carrier-protein] synthase (128 aa).

Residues D10 and E59 each contribute to the Mg(2+) site.

Belongs to the P-Pant transferase superfamily. AcpS family. It depends on Mg(2+) as a cofactor.

Its subcellular location is the cytoplasm. It carries out the reaction apo-[ACP] + CoA = holo-[ACP] + adenosine 3',5'-bisphosphate + H(+). Its function is as follows. Transfers the 4'-phosphopantetheine moiety from coenzyme A to a Ser of acyl-carrier-protein. The protein is Holo-[acyl-carrier-protein] synthase of Syntrophotalea carbinolica (strain DSM 2380 / NBRC 103641 / GraBd1) (Pelobacter carbinolicus).